We begin with the raw amino-acid sequence, 790 residues long: PAN2-PAN3 deadenylation complex subunit PAN3 (790 aa).

2 disordered regions span residues 166–191 (IAQQ…AVSA) and 235–259 (AMIS…ASPI). The span at 168-191 (QQQPQHPQKQQQHPPSVGGGAVSA) shows a compositional bias: low complexity. Residues 369-655 (DAAEAAQHAL…SVTDLMPMIG (287 aa)) are pseudokinase domain. ATP-binding positions include Arg423, 472–479 (DYHPGSQT), and 552–553 (TK). A coiled-coil region spans residues 656 to 694 (ARFYTQLDALQSKIDMQEDELAKEMENGRLYRILVKLNS). Residues 695-790 (INERPDFNLD…FSELMSSAAN (96 aa)) form a knob domain region.

Belongs to the protein kinase superfamily. PAN3 family. Homodimer. Forms a heterotrimer with a catalytic subunit PAN2 to form the poly(A)-nuclease (PAN) deadenylation complex. Interacts (via PAM-2 motif) with poly(A)-binding protein (via PABC domain), conferring substrate specificity of the enzyme complex. Interacts with the GW182 family protein gw. Interacts with Gyf.

It is found in the cytoplasm. The protein resides in the P-body. Its function is as follows. Regulatory subunit of the poly(A)-nuclease (PAN) deadenylation complex, one of two cytoplasmic mRNA deadenylases involved in general and miRNA-mediated mRNA turnover. PAN specifically shortens poly(A) tails of RNA and the activity is stimulated by poly(A)-binding protein (PABP). PAN deadenylation is followed by rapid degradation of the shortened mRNA tails by the CCR4-NOT complex. Deadenylated mRNAs are then degraded by two alternative mechanisms, namely exosome-mediated 3'-5' exonucleolytic degradation, or deadenylation-dependent mRNA decaping and subsequent 5'-3' exonucleolytic degradation by XRN1. PAN3 acts as a positive regulator for PAN activity, recruiting the catalytic subunit PAN2 to mRNA via its interaction with RNA and PABP, and to miRNA targets via its interaction with GW182 family proteins. This Drosophila melanogaster (Fruit fly) protein is PAN2-PAN3 deadenylation complex subunit PAN3.